Consider the following 236-residue polypeptide: Large ribosomal subunit protein uL1 (236 aa).

The protein belongs to the universal ribosomal protein uL1 family. In terms of assembly, part of the 50S ribosomal subunit.

Binds directly to 23S rRNA. The L1 stalk is quite mobile in the ribosome, and is involved in E site tRNA release. In terms of biological role, protein L1 is also a translational repressor protein, it controls the translation of the L11 operon by binding to its mRNA. The chain is Large ribosomal subunit protein uL1 from Corynebacterium glutamicum (strain R).